Reading from the N-terminus, the 461-residue chain is MSRQVVRSSKFRHVFGQPAKADQCYEDVRVSQTTWDSGFCAVNPKFMALICEASGGGAFLVLPLGKTGRVDKNVPLVCGHTAPVLDIAWCPHNDNVIASGSEDCTVMVWEIPDGGLVLPLREPVVTLEGHTKRVGIVAWHPTAQNVLLSAGCDNVILVWDVGTGAAVLTLGPDVHPDTIYSVDWSRDGALICTSCRDKRVRVIEPRKGTVVAEKERPHEGTRPVHAVFVSEGKILTTGFSRMSERQVALWDTKHLEEPLSLQELDTSSGVLLPFFDPDTNIVYLCGKGDSSIRYFEITSEAPFLHYLSMFSSKESQRGMGYMPKRGLEVNKCEIARFYKLHERKCEPIAMTVPRKSDLFQEDLYPPTAGPDPALTAEEWLSGRDAGPLLISLKDGYVPPKSRELRVNRGLDSARRRATPEPSSTLSSDTVSRLEEDVRNLNAIVQKLQERLDRLEETVQAK.

Ser-2 is subject to N-acetylserine. A Phosphoserine; by PKC modification is found at Ser-2. WD repeat units follow at residues 13–63 (HVFG…LVLP), 73–110 (NVPLVCGHTAPVLDIAWCPHNDNVIASGSEDCTVMVWE), 123–160 (PVVTLEGHTKRVGIVAWHPTAQNVLLSAGCDNVILVWD), 164–204 (GAAV…RVIE), 207–251 (KGTV…ALWD), 258–296 (PLSLQELDTSSGVLLPFFDPDTNIVYLCGKGDSSIRYFE), and 302–349 (PFLH…EPIA). Residues 407-418 (NRGLDSARRRAT) are compositionally biased toward basic and acidic residues. The segment at 407-431 (NRGLDSARRRATPEPSSTLSSDTVS) is disordered. Phosphoserine; by PKC is present on Ser-412. Thr-418 carries the post-translational modification Phosphothreonine. Over residues 420-430 (EPSSTLSSDTV) the composition is skewed to polar residues. Residue Ser-422 is modified to Phosphoserine. The stretch at 425–461 (LSSDTVSRLEEDVRNLNAIVQKLQERLDRLEETVQAK) forms a coiled coil.

This sequence belongs to the WD repeat coronin family. In terms of assembly, binds actin. Phosphorylation at Ser-412 by PKC strongly down-regulates the association with actin. Post-translationally, polyubiquitinated by RNF128 with 'Lys-48'-linked chains, leading to proteasomal degradation.

Its subcellular location is the cytoplasm. The protein localises to the cytoskeleton. The protein resides in the cell cortex. It is found in the cytoplasmic vesicle. It localises to the phagosome membrane. Its function is as follows. May be a crucial component of the cytoskeleton of highly motile cells, functioning both in the invagination of large pieces of plasma membrane, as well as in forming protrusions of the plasma membrane involved in cell locomotion. The polypeptide is Coronin-1A (Coro1a) (Rattus norvegicus (Rat)).